Reading from the N-terminus, the 788-residue chain is Cadherin-related family member 4 (788 aa).

Positions 1–16 are cleaved as a signal peptide; sequence MVLLRLLVFLFAPVVS. Residues 17 to 686 are Extracellular-facing; it reads DLCSLPCFIN…DTEAFWQPQP (670 aa). Cadherin domains are found at residues 237–338, 339–449, 444–554, and 551–674; these read LEQA…PPRC, LPAL…APRT, ACAP…EPPF, and EPPF…TPML. The N-linked (GlcNAc...) asparagine glycan is linked to N242. The helical transmembrane segment at 687 to 707 threads the bilayer; sequence WFVVVLTATGALLLLALGWLL. Residues 708–788 are Cytoplasmic-facing; the sequence is GRLLQGLAQL…NTHTGARRWL (81 aa).

The protein resides in the membrane. Functionally, cadherins are calcium-dependent cell adhesion proteins. They preferentially interact with themselves in a homophilic manner in connecting cells; cadherins may thus contribute to the sorting of heterogeneous cell types. The polypeptide is Cadherin-related family member 4 (CDHR4) (Homo sapiens (Human)).